The sequence spans 798 residues: Probable G-protein coupled receptor 156 (798 aa).

At 1–49 (MEPEINCSEFCDSFPGQELDRRPLHDLCKTTITESQHSSTAASPLSPAL) the chain is on the extracellular side. Asn6 carries an N-linked (GlcNAc...) asparagine glycan. A helical transmembrane segment spans residues 50–70 (LGIMWTFLSCGLLLVLFFLAF). Over 71–86 (TIRCRKNRIVKMSSPN) the chain is Cytoplasmic. The helical transmembrane segment at 87 to 107 (LNVVTLLGSCLTYISAYLFGI) threads the bilayer. Residues 108–118 (QDALEGSSVEA) are Extracellular-facing. A helical membrane pass occupies residues 119-139 (LIQTRLSLLCIGTSLVFGPIL). The Cytoplasmic portion of the chain corresponds to 140–164 (GKSWRLYKVFTQRVPDKRVIIKDLQ). The chain crosses the membrane as a helical span at residues 165 to 185 (LLGLVAALVVADVILLVTWVL). The Extracellular portion of the chain corresponds to 186 to 222 (TDPIQCLQMLGVSMKVTGRDVSCSLTNTHFCASRYSD). A helical membrane pass occupies residues 223–243 (VWIALVLGCKGLLLLYGAYLA). Residues 244–257 (GLTNHVSSPPVNQS) lie on the Cytoplasmic side of the membrane. Residues 258–278 (LTIMVGVNLLLLTAGLLFVVT) form a helical membrane-spanning segment. Over 279 to 288 (RYLHSWPNLV) the chain is Extracellular. Residues 289–309 (FGLTSGGIFVCTTTVNCCVFI) form a helical membrane-spanning segment. Over 310–798 (PQLKQWKAFE…FKDDLKPTLV (489 aa)) the chain is Cytoplasmic. Residues 353–390 (DEKSCMERLLTEKNAVIESLQEQVSNAKEKLVKLMSAE) adopt a coiled-coil conformation. 3 disordered regions span residues 441–497 (HVQG…PMAP), 546–666 (SEAP…KQCE), and 693–715 (PAAP…PRLS). The span at 479–492 (PKAEQSEGPERGDQ) shows a compositional bias: basic and acidic residues. A compositionally biased stretch (polar residues) spans 559–572 (LWKSTTSRSPQKLS). Residues 583–594 (VRRRRAAQRARS) show a composition bias toward basic residues. Over residues 606-624 (HQANSTVSSSQSGLIVQNR) the composition is skewed to polar residues. The segment covering 639-648 (PRSSSVKPSP) has biased composition (low complexity).

This sequence belongs to the G-protein coupled receptor 3 family. GABA-B receptor subfamily. In terms of tissue distribution, expressed in the outer and inner hair cells of the organ of Corti (at protein level). Expressed in the utricle and saccule within the vestibule (at protein level).

The protein resides in the cell membrane. It is found in the postsynaptic cell membrane. Its function is as follows. Orphan G-protein coupled receptor involved in the regulation of hair cell orientation in mechanosensory organs of the inner ear. It is required to trigger a 180 degree reversal in hair cell orientation, creating a virtual line of polarity reversal (LPR) across which stereociliary bundles are arranged in opposite orientations. The sequence is that of Probable G-protein coupled receptor 156 (Gpr156) from Mus musculus (Mouse).